We begin with the raw amino-acid sequence, 361 residues long: Isocitrate dehydrogenase [NAD] subunit 1, mitochondrial (361 aa).

The N-terminal 12 residues, 1 to 12, are a transit peptide targeting the mitochondrion; that stretch reads MLRQGIAAQKKS. Substrate is bound by residues arginine 110, arginine 141, and aspartate 229. Mg(2+) is bound at residue aspartate 229.

It belongs to the isocitrate and isopropylmalate dehydrogenases family. As to quaternary structure, octamer of two non-identical subunits IDH1 and IDH2. The cofactor is Mg(2+). Mn(2+) is required as a cofactor.

It is found in the mitochondrion. It catalyses the reaction D-threo-isocitrate + NAD(+) = 2-oxoglutarate + CO2 + NADH. Functionally, performs an essential role in the oxidative function of the citric acid cycle. The polypeptide is Isocitrate dehydrogenase [NAD] subunit 1, mitochondrial (IDH1) (Kluyveromyces lactis (strain ATCC 8585 / CBS 2359 / DSM 70799 / NBRC 1267 / NRRL Y-1140 / WM37) (Yeast)).